We begin with the raw amino-acid sequence, 320 residues long: Cytochrome f (320 aa).

The N-terminal stretch at 1 to 35 (MQTRNTFSWIREEITRSISVSLIIYIITRASISSA) is a signal peptide. Heme is bound by residues tyrosine 36, cysteine 56, cysteine 59, and histidine 60. The chain crosses the membrane as a helical span at residues 286 to 306 (VQGLLFFLASVVLAQIFLVLK).

This sequence belongs to the cytochrome f family. In terms of assembly, the 4 large subunits of the cytochrome b6-f complex are cytochrome b6, subunit IV (17 kDa polypeptide, petD), cytochrome f and the Rieske protein, while the 4 small subunits are PetG, PetL, PetM and PetN. The complex functions as a dimer. Requires heme as cofactor.

It localises to the plastid. The protein resides in the chloroplast thylakoid membrane. Functionally, component of the cytochrome b6-f complex, which mediates electron transfer between photosystem II (PSII) and photosystem I (PSI), cyclic electron flow around PSI, and state transitions. This Draba nemorosa (Woodland whitlowgrass) protein is Cytochrome f.